We begin with the raw amino-acid sequence, 342 residues long: Large ribosomal subunit protein uL10 (342 aa).

The segment at 212–342 is required for interaction with ribosomal protein L12 dimers; sequence EYIDMLQKAY…ALAGLSALFG (131 aa). Residues 299 to 308 show a composition bias toward polar residues; that stretch reads QAQVAVATQP. The segment at 299-342 is disordered; sequence QAQVAVATQPSEEEKKEEEKTEEEEKEEEASEEEALAGLSALFG. The span at 318 to 333 shows a compositional bias: acidic residues; the sequence is KTEEEEKEEEASEEEA.

Belongs to the universal ribosomal protein uL10 family. Part of the 50S ribosomal subunit, binds large rRNA. Forms the ribosomal stalk which helps the ribosome interact with GTP-bound translation factors. Forms a heptameric L10(L12)2(L12)2(L12)2 complex, where L10 forms an elongated spine to which the L12 dimers bind in a sequential fashion.

Functionally, forms the large subunit's ribosomal stalk, playing a central role in the interaction of the ribosome with elongation factors; the stalk complex of P.horikoshii binds to E.coli large subunits and confers on them the ability to interact with eukaryotic elongation factors. Each succesive L12 dimer bound along the P0 spine increases the GTPase activity of elongation factors and increases translation by reconsituted ribosomes, although the first site is the most stimulatory. The sequence is that of Large ribosomal subunit protein uL10 from Pyrococcus horikoshii (strain ATCC 700860 / DSM 12428 / JCM 9974 / NBRC 100139 / OT-3).